An 869-amino-acid chain; its full sequence is DNA mismatch repair protein MutS (869 aa).

602–609 (GPNMSGKS) serves as a coordination point for ATP.

Belongs to the DNA mismatch repair MutS family.

In terms of biological role, this protein is involved in the repair of mismatches in DNA. It is possible that it carries out the mismatch recognition step. This protein has a weak ATPase activity. The protein is DNA mismatch repair protein MutS of Staphylococcus carnosus (strain TM300).